The primary structure comprises 199 residues: Thymidylate kinase (199 aa).

Residue 7-14 (GTEGVGKT) participates in ATP binding.

Belongs to the thymidylate kinase family.

The catalysed reaction is dTMP + ATP = dTDP + ADP. Functionally, phosphorylation of dTMP to form dTDP in both de novo and salvage pathways of dTTP synthesis. In Acinetobacter baumannii (strain ATCC 17978 / DSM 105126 / CIP 53.77 / LMG 1025 / NCDC KC755 / 5377), this protein is Thymidylate kinase.